We begin with the raw amino-acid sequence, 364 residues long: DNA replication and repair protein RecF (364 aa).

30 to 37 is a binding site for ATP; it reads GENGSGKT.

It belongs to the RecF family.

Its subcellular location is the cytoplasm. Functionally, the RecF protein is involved in DNA metabolism; it is required for DNA replication and normal SOS inducibility. RecF binds preferentially to single-stranded, linear DNA. It also seems to bind ATP. This is DNA replication and repair protein RecF from Xylella fastidiosa (strain M12).